The following is a 312-amino-acid chain: Acetyl-coenzyme A carboxylase carboxyl transferase subunit alpha (312 aa).

Positions 36–286 (ELEKEIEKTF…KTYFLESVKA (251 aa)) constitute a CoA carboxyltransferase C-terminal domain.

This sequence belongs to the AccA family. Acetyl-CoA carboxylase is a heterohexamer composed of biotin carboxyl carrier protein (AccB), biotin carboxylase (AccC) and two subunits each of ACCase subunit alpha (AccA) and ACCase subunit beta (AccD).

It is found in the cytoplasm. It carries out the reaction N(6)-carboxybiotinyl-L-lysyl-[protein] + acetyl-CoA = N(6)-biotinyl-L-lysyl-[protein] + malonyl-CoA. It functions in the pathway lipid metabolism; malonyl-CoA biosynthesis; malonyl-CoA from acetyl-CoA: step 1/1. Functionally, component of the acetyl coenzyme A carboxylase (ACC) complex. First, biotin carboxylase catalyzes the carboxylation of biotin on its carrier protein (BCCP) and then the CO(2) group is transferred by the carboxyltransferase to acetyl-CoA to form malonyl-CoA. The chain is Acetyl-coenzyme A carboxylase carboxyl transferase subunit alpha from Sulfurovum sp. (strain NBC37-1).